We begin with the raw amino-acid sequence, 335 residues long: MTWFTPEVIDVILTVIKAIVILLAVVVAGALLSFVERRLLGWWQDRYGPNRVGPFGMFQIAADMLKMFFKEDWTPPFADKVIFTLAPVVAMSALLIAFAIIPITPTWGVADLNIGLLFFFAMAGLSVYAVLFAGWSSNNKFALLGSLRASAQTVSYEVFMGLALMGIVVQVGSFNMRDIVEYQAQNLWFIIPQFFGFCTFFIAGVAVTHRHPFDQPEAEQELADGYHIEYAGMKWGMFFVGEYIGIILISALLVTLFFGGWHGPFGILPQLSFVWFALKTAFFILLFILLRASIPRPRYDQVMDFSWKFCLPLTLINLLVTAAIVLWNTPAVAVQ.

Helical transmembrane passes span 11 to 31 (VILTVIKAIVILLAVVVAGAL), 81 to 101 (VIFTLAPVVAMSALLIAFAII), 114 to 134 (IGLLFFFAMAGLSVYAVLFAG), 154 to 174 (VSYEVFMGLALMGIVVQVGSF), 187 to 207 (LWFIIPQFFGFCTFFIAGVAV), 238 to 258 (FFVGEYIGIILISALLVTLFF), 270 to 290 (QLSFVWFALKTAFFILLFILL), and 307 to 327 (WKFCLPLTLINLLVTAAIVLW).

The protein belongs to the complex I subunit 1 family. In terms of assembly, NDH-1 is composed of 13 different subunits. Subunits NuoA, H, J, K, L, M, N constitute the membrane sector of the complex.

The protein localises to the cell inner membrane. The enzyme catalyses a quinone + NADH + 5 H(+)(in) = a quinol + NAD(+) + 4 H(+)(out). Its function is as follows. NDH-1 shuttles electrons from NADH, via FMN and iron-sulfur (Fe-S) centers, to quinones in the respiratory chain. The immediate electron acceptor for the enzyme in this species is believed to be ubiquinone. Couples the redox reaction to proton translocation (for every two electrons transferred, four hydrogen ions are translocated across the cytoplasmic membrane), and thus conserves the redox energy in a proton gradient. This subunit may bind ubiquinone. In Pseudomonas fluorescens (strain Pf0-1), this protein is NADH-quinone oxidoreductase subunit H.